Here is a 275-residue protein sequence, read N- to C-terminus: Rhamnulose-1-phosphate aldolase (275 aa).

E117 is a catalytic residue. H141, H143, and H212 together coordinate Zn(2+).

It belongs to the aldolase class II family. RhaD subfamily. As to quaternary structure, homotetramer. It depends on Zn(2+) as a cofactor.

It localises to the cytoplasm. It carries out the reaction L-rhamnulose 1-phosphate = (S)-lactaldehyde + dihydroxyacetone phosphate. The protein operates within carbohydrate degradation; L-rhamnose degradation; glycerone phosphate from L-rhamnose: step 3/3. In terms of biological role, catalyzes the reversible cleavage of L-rhamnulose-1-phosphate to dihydroxyacetone phosphate (DHAP) and L-lactaldehyde. The protein is Rhamnulose-1-phosphate aldolase of Salmonella paratyphi C (strain RKS4594).